The primary structure comprises 499 residues: Cytochrome P450 2M1 (499 aa).

Cysteine 441 serves as a coordination point for heme.

The protein belongs to the cytochrome P450 family. The cofactor is heme. In kidney and in liver from juvenile and sexually mature trout from both sexes.

It is found in the endoplasmic reticulum membrane. The protein resides in the microsome membrane. It carries out the reaction an organic molecule + reduced [NADPH--hemoprotein reductase] + O2 = an alcohol + oxidized [NADPH--hemoprotein reductase] + H2O + H(+). Functionally, has (omega-6)-hydroxylation activity toward lauric acid. This chain is Cytochrome P450 2M1 (cyp2m1), found in Oncorhynchus mykiss (Rainbow trout).